A 713-amino-acid chain; its full sequence is Polyribonucleotide nucleotidyltransferase (713 aa).

Mg(2+) is bound by residues Asp-485 and Asp-491. Residues 552-611 enclose the KH domain; that stretch reads PRIYTMKIDPKKIKDVIGKGGATVRSLTEETGTSIDIDDDGTVKIAAVDKNAVQEVMSRI. The S1 motif domain maps to 621–689; it reads GVVYKGKVTR…RQGRIRLTMK (69 aa). The interval 694–713 is disordered; sequence DQTKNEENLLQSEEGSPVQE. Over residues 701–713 the composition is skewed to polar residues; sequence NLLQSEEGSPVQE.

Belongs to the polyribonucleotide nucleotidyltransferase family. In terms of assembly, component of the RNA degradosome, which is a multiprotein complex involved in RNA processing and mRNA degradation. It depends on Mg(2+) as a cofactor.

It is found in the cytoplasm. The enzyme catalyses RNA(n+1) + phosphate = RNA(n) + a ribonucleoside 5'-diphosphate. Its function is as follows. Involved in mRNA degradation. Catalyzes the phosphorolysis of single-stranded polyribonucleotides processively in the 3'- to 5'-direction. This is Polyribonucleotide nucleotidyltransferase from Histophilus somni (strain 2336) (Haemophilus somnus).